Reading from the N-terminus, the 181-residue chain is MSSLSVYHVSSPDLPNKVLTHFDDIAATLAEQGIRFDRWPATTRVAPGTSQQEVICAYQEQVDRLMTEGGYASVDVISLDEDHPRKAELRASFLDEHRHSEDEVRFFVAGRGLFNLHIDDYVYAVLCERNDLISVPAGTAHWFDMGERPNLVAIRMFNNPQGWNASLTGDAIASQFPRLDD.

4 residues coordinate Fe(2+): histidine 97, histidine 99, glutamate 103, and histidine 141. Positions 97, 99, 103, and 141 each coordinate Ni(2+).

The protein belongs to the acireductone dioxygenase (ARD) family. As to quaternary structure, monomer. Fe(2+) serves as cofactor. Requires Ni(2+) as cofactor.

It catalyses the reaction 1,2-dihydroxy-5-(methylsulfanyl)pent-1-en-3-one + O2 = 3-(methylsulfanyl)propanoate + CO + formate + 2 H(+). The catalysed reaction is 1,2-dihydroxy-5-(methylsulfanyl)pent-1-en-3-one + O2 = 4-methylsulfanyl-2-oxobutanoate + formate + 2 H(+). It participates in amino-acid biosynthesis; L-methionine biosynthesis via salvage pathway; L-methionine from S-methyl-5-thio-alpha-D-ribose 1-phosphate: step 5/6. In terms of biological role, catalyzes 2 different reactions between oxygen and the acireductone 1,2-dihydroxy-3-keto-5-methylthiopentene (DHK-MTPene) depending upon the metal bound in the active site. Fe-containing acireductone dioxygenase (Fe-ARD) produces formate and 2-keto-4-methylthiobutyrate (KMTB), the alpha-ketoacid precursor of methionine in the methionine recycle pathway. Ni-containing acireductone dioxygenase (Ni-ARD) produces methylthiopropionate, carbon monoxide and formate, and does not lie on the methionine recycle pathway. The protein is Acireductone dioxygenase of Pseudomonas fluorescens (strain ATCC BAA-477 / NRRL B-23932 / Pf-5).